The following is a 255-amino-acid chain: Syntaxin-6 (255 aa).

Serine 2 carries the post-translational modification N-acetylserine. A Phosphoserine modification is found at serine 2. The interval 2-112 (SMEDPFFVVK…KDQMSASSVQ (111 aa)) is interaction with BLTP3B. Positions 2-168 (SMEDPFFVVK…QAQQQLIVEQ (167 aa)) are required for interaction with VPS51. Topologically, residues 2-234 (SMEDPFFVVK…VSHMTSDRRQ (233 aa)) are cytoplasmic. Positions 41–74 (EEIDWTTNELRNNLRSIEWDLEDLDETISIVEAN) form a coiled coil. 2 positions are modified to phosphoserine: serine 129 and serine 152. Residues 163 to 225 (QLIVEQQDEQ…DNVMKKLAKV (63 aa)) enclose the t-SNARE coiled-coil homology domain. The chain crosses the membrane as a helical; Anchor for type IV membrane protein span at residues 235–255 (WCAIAILFAVLLVVLTLFLVL).

It belongs to the syntaxin family. Identified in a complex containing STX6, STX12, VAMP4 and VTI1A. Binds EEA1. Interacts with VPS45A and GOPC. Interacts with MARCHF2; the interaction promotes MARCHF2-mediated ubiquitination and degradation of CFTR. Interacts with MARCHF3. Interacts with BLTP3B (via C-terminal coiled-coil domain). Interacts with BAIAP3; this interaction is increased in the presence of calcium. Interacts (via N-terminus) with VPS51. Interacts with VPS13B. In terms of tissue distribution, widely expressed, with relatively higher expression in brain, lung and kidney.

It localises to the golgi apparatus membrane. The protein localises to the golgi apparatus. The protein resides in the trans-Golgi network membrane. Its subcellular location is the recycling endosome membrane. Functionally, SNARE promoting movement of transport vesicles to target membranes. Targets endosomes to the trans-Golgi network, and may therefore function in retrograde trafficking. Together with SNARE STX12, promotes movement of vesicles from endosomes to the cell membrane, and may therefore function in the endocytic recycling pathway. In Rattus norvegicus (Rat), this protein is Syntaxin-6 (Stx6).